Here is a 308-residue protein sequence, read N- to C-terminus: HTH-type transcriptional activator AllS (308 aa).

Residues 2-59 (FDPETLRTFIAVAETGSFSKAAERLCKTTATISYRIKLLEENTGVALFFRTTRSVTLT) form the HTH lysR-type domain. The H-T-H motif DNA-binding region spans 19–38 (FSKAAERLCKTTATISYRIK).

The protein belongs to the LysR transcriptional regulatory family.

Functionally, positive regulator essential for the expression of allD operon. Binds to the allD promoter. This Escherichia coli O1:K1 / APEC protein is HTH-type transcriptional activator AllS (allS).